Consider the following 172-residue polypeptide: Myosin regulatory light chain 12B (172 aa).

Residues 1–16 show a composition bias toward basic residues; sequence MSSKKAKTKTTKKRPQ. Positions 1–20 are disordered; sequence MSSKKAKTKTTKKRPQRATS. The residue at position 19 (threonine 19) is a Phosphothreonine; by MLCK and ZIPK/DAPK3. Serine 20 is subject to Phosphoserine; by MLCK and ZIPK/DAPK3. EF-hand domains lie at 29–64, 98–133, and 134–169; these read SQIQ…LGKN, DPED…MGDR, and FTDE…GAKD. Residues aspartate 42, asparagine 44, aspartate 46, and aspartate 53 each contribute to the Ca(2+) site.

Myosin is a hexamer of 2 heavy chains and 4 light chains: interacts with myosin heavy chain MYO19. Post-translationally, phosphorylation increases the actin-activated myosin ATPase activity and thereby regulates the contractile activity. It is required to generate the driving force in the migration of the cells but not necessary for localization of myosin-2 at the leading edge. Phosphorylation is reduced following epigallocatechin-3-O-gallate treatment. As to expression, ubiquitously expressed in various hematopoietic cells.

Its function is as follows. Myosin regulatory subunit that plays an important role in regulation of both smooth muscle and nonmuscle cell contractile activity via its phosphorylation. Phosphorylation triggers actin polymerization in vascular smooth muscle. Implicated in cytokinesis, receptor capping, and cell locomotion. The chain is Myosin regulatory light chain 12B (MYL12B) from Homo sapiens (Human).